The following is a 127-amino-acid chain: Large-conductance mechanosensitive channel (127 aa).

3 helical membrane passes run 8–28 (FAFK…AAFG), 30–50 (IVTA…LSLI), and 70–90 (IGVL…LFLF).

The protein belongs to the MscL family. Homopentamer.

It localises to the cell membrane. Functionally, channel that opens in response to stretch forces in the membrane lipid bilayer. May participate in the regulation of osmotic pressure changes within the cell. The chain is Large-conductance mechanosensitive channel from Herpetosiphon aurantiacus (strain ATCC 23779 / DSM 785 / 114-95).